The chain runs to 191 residues: Dephospho-CoA kinase (191 aa).

One can recognise a DPCK domain in the interval 3–191 (AIGITGSYAS…KLIKDLECRV (189 aa)). Residue 11-16 (ASGKTF) coordinates ATP.

It belongs to the CoaE family.

The protein localises to the cytoplasm. It catalyses the reaction 3'-dephospho-CoA + ATP = ADP + CoA + H(+). Its pathway is cofactor biosynthesis; coenzyme A biosynthesis; CoA from (R)-pantothenate: step 5/5. Functionally, catalyzes the phosphorylation of the 3'-hydroxyl group of dephosphocoenzyme A to form coenzyme A. The protein is Dephospho-CoA kinase of Rickettsia conorii (strain ATCC VR-613 / Malish 7).